Here is a 224-residue protein sequence, read N- to C-terminus: Urease accessory protein UreF (224 aa).

It belongs to the UreF family. In terms of assembly, ureD, UreF and UreG form a complex that acts as a GTP-hydrolysis-dependent molecular chaperone, activating the urease apoprotein by helping to assemble the nickel containing metallocenter of UreC. The UreE protein probably delivers the nickel.

Its subcellular location is the cytoplasm. Functionally, required for maturation of urease via the functional incorporation of the urease nickel metallocenter. This is Urease accessory protein UreF from Pseudomonas entomophila (strain L48).